A 436-amino-acid polypeptide reads, in one-letter code: Chaperone protein dnaJ 16 (436 aa).

Residues 20 to 85 (DPYEVLGVLR…EKRRQFDSAG (66 aa)) form the J domain. A coiled-coil region spans residues 291-348 (TQEKEDLRSVEAQILTKRAELAKFETEYREVLVQFTDMTSRYAQEMQSIDELLKQRNE). The interval 360–416 (KRSSSKNRMRKSSFKKAAAKAPAPTEQEEEEEEEEEEEEESSRQKNKKPSTCDKSET) is disordered. Basic residues predominate over residues 362-377 (SSSKNRMRKSSFKKAA). The segment covering 385–399 (EQEEEEEEEEEEEEE) has biased composition (acidic residues).

The protein belongs to the DnaJ family. B/II subfamily. In terms of tissue distribution, expressed constitutively in seedlings, roots, leaves, stems, flowers and siliques.

Its subcellular location is the membrane. Its function is as follows. Plays a continuous role in plant development probably in the structural organization of compartments. Seems to not be involved in gravitropism signaling pathway. The sequence is that of Chaperone protein dnaJ 16 (ATJ16) from Arabidopsis thaliana (Mouse-ear cress).